The sequence spans 466 residues: 3-isopropylmalate dehydratase large subunit (466 aa).

3 residues coordinate [4Fe-4S] cluster: C347, C407, and C410.

This sequence belongs to the aconitase/IPM isomerase family. LeuC type 1 subfamily. In terms of assembly, heterodimer of LeuC and LeuD. [4Fe-4S] cluster is required as a cofactor.

The catalysed reaction is (2R,3S)-3-isopropylmalate = (2S)-2-isopropylmalate. It participates in amino-acid biosynthesis; L-leucine biosynthesis; L-leucine from 3-methyl-2-oxobutanoate: step 2/4. Catalyzes the isomerization between 2-isopropylmalate and 3-isopropylmalate, via the formation of 2-isopropylmaleate. The sequence is that of 3-isopropylmalate dehydratase large subunit from Pseudoalteromonas translucida (strain TAC 125).